Consider the following 367-residue polypeptide: MKASPHRPTKVLIHLGAIRQNIQQMGAHIPQGTLKWAVVKANAYGHGAVAVAKAIQDDVDGFCVSNIDEAIELRQAGLSKPILILGVSEIEAVALAKEYDFTLTVAGLEWIQALLDKEVDLTGLTVHLKIDSGMGRIGFREASEVEQAQDLLQQHGVRVEGIFTHFATADEESDDYFNAQLERFKTILASMKEVPELVHASNSATTLWHVETIFNAVRMGDAMYGLNPSGAVLDLPYDLIPALTLESALVHVKTVPAGACMGYGATYQADSEQVIATVPIGYADGWTRDMQNFSVLVDGQACPIVGRVSMDQITIRLPKLYPLGTKVTLIGSNGDKEITATQVATYRVTINYEVVCLLSDRIPREYY.

Lys40 serves as the catalytic Proton acceptor; specific for D-alanine. Lys40 is subject to N6-(pyridoxal phosphate)lysine. Arg136 is a substrate binding site. Tyr263 acts as the Proton acceptor; specific for L-alanine in catalysis. Met310 contacts substrate.

The protein belongs to the alanine racemase family. Requires pyridoxal 5'-phosphate as cofactor.

It carries out the reaction L-alanine = D-alanine. It functions in the pathway amino-acid biosynthesis; D-alanine biosynthesis; D-alanine from L-alanine: step 1/1. Catalyzes the interconversion of L-alanine and D-alanine. May also act on other amino acids. The protein is Alanine racemase (alr) of Streptococcus pneumoniae (strain Taiwan19F-14).